A 238-amino-acid chain; its full sequence is Phosphoribosylaminoimidazole-succinocarboxamide synthase (238 aa).

It belongs to the SAICAR synthetase family.

The catalysed reaction is 5-amino-1-(5-phospho-D-ribosyl)imidazole-4-carboxylate + L-aspartate + ATP = (2S)-2-[5-amino-1-(5-phospho-beta-D-ribosyl)imidazole-4-carboxamido]succinate + ADP + phosphate + 2 H(+). It functions in the pathway purine metabolism; IMP biosynthesis via de novo pathway; 5-amino-1-(5-phospho-D-ribosyl)imidazole-4-carboxamide from 5-amino-1-(5-phospho-D-ribosyl)imidazole-4-carboxylate: step 1/2. The polypeptide is Phosphoribosylaminoimidazole-succinocarboxamide synthase (Nitrosococcus oceani (strain ATCC 19707 / BCRC 17464 / JCM 30415 / NCIMB 11848 / C-107)).